The following is a 72-amino-acid chain: UPF0270 protein YheU (72 aa).

It belongs to the UPF0270 family.

The protein is UPF0270 protein YheU of Escherichia fergusonii (strain ATCC 35469 / DSM 13698 / CCUG 18766 / IAM 14443 / JCM 21226 / LMG 7866 / NBRC 102419 / NCTC 12128 / CDC 0568-73).